Here is a 165-residue protein sequence, read N- to C-terminus: Photosystem I assembly protein Ycf3 (165 aa).

3 TPR repeats span residues 32-65 (AFTY…EIDP), 69-102 (SYIL…NPFL), and 117-150 (GEQA…TPGN).

It belongs to the Ycf3 family.

The protein localises to the plastid. It is found in the chloroplast thylakoid membrane. Its function is as follows. Essential for the assembly of the photosystem I (PSI) complex. May act as a chaperone-like factor to guide the assembly of the PSI subunits. The sequence is that of Photosystem I assembly protein Ycf3 from Spinacia oleracea (Spinach).